The chain runs to 305 residues: Delta-9 acyl-lipid desaturase 1 (305 aa).

Residues 1–20 (MSLSASEKEENNKKMAADKA) form a disordered region. The next 2 helical transmembrane spans lie at 39-59 (IVKA…PFNF) and 60-80 (TWPA…GITV). Fe cation is bound by residues His83, His88, His120, His123, and His124. Positions 83–88 (HRNLAH) match the Histidine box-1 motif. The short motif at 120-124 (HRYHH) is the Histidine box-2 element. Residues 180–200 (VLYHILTFGFLLYYFGGLSFL) form a helical membrane-spanning segment. The Fe cation site is built by His223, His252, His255, and His256. Residues 252–256 (HNNHH) carry the Histidine box-3 motif. The helical transmembrane segment at 268 to 288 (WWQIDISWYIVRFLEIIGLAT) threads the bilayer.

Belongs to the fatty acid desaturase type 1 family. It depends on Fe cation as a cofactor. In terms of tissue distribution, strongly expressed in inflorescence meristems, leaves, and flowers, and weakly in roots and seedpods.

It localises to the endoplasmic reticulum membrane. The protein localises to the plastid. It is found in the chloroplast membrane. Its pathway is lipid metabolism; polyunsaturated fatty acid biosynthesis. Its function is as follows. Involved in delta-9 desaturation of fatty acids. Involved in the production of very-long-chain fatty acids (VLCFAs). May desaturate chloroplastic monogalactosyl diacylglycerol (MGDG) and alter chloroplast membrane fluidity, which is required to prime a cold acclimation response. The polypeptide is Delta-9 acyl-lipid desaturase 1 (Arabidopsis thaliana (Mouse-ear cress)).